Here is a 159-residue protein sequence, read N- to C-terminus: Endoribonuclease YbeY (159 aa).

Residues His114, His118, and His124 each contribute to the Zn(2+) site.

This sequence belongs to the endoribonuclease YbeY family. Requires Zn(2+) as cofactor.

The protein resides in the cytoplasm. In terms of biological role, single strand-specific metallo-endoribonuclease involved in late-stage 70S ribosome quality control and in maturation of the 3' terminus of the 16S rRNA. This is Endoribonuclease YbeY from Pectobacterium atrosepticum (strain SCRI 1043 / ATCC BAA-672) (Erwinia carotovora subsp. atroseptica).